The primary structure comprises 328 residues: D-cysteine desulfhydrase (328 aa).

At Lys51 the chain carries N6-(pyridoxal phosphate)lysine.

Belongs to the ACC deaminase/D-cysteine desulfhydrase family. As to quaternary structure, homodimer. The cofactor is pyridoxal 5'-phosphate.

The enzyme catalyses D-cysteine + H2O = hydrogen sulfide + pyruvate + NH4(+) + H(+). Functionally, catalyzes the alpha,beta-elimination reaction of D-cysteine and of several D-cysteine derivatives. It could be a defense mechanism against D-cysteine. The chain is D-cysteine desulfhydrase from Salmonella typhimurium (strain LT2 / SGSC1412 / ATCC 700720).